The chain runs to 275 residues: MNTQLSRTQFQFQPFHLVTPSPWPLLTSFALLILTSAAVMYFNGYANPLGGSGALLVGIGLATTVAAMALWFRDVVAEGTFLGDHTILVQKGITMGVALFIISEVFFFISVFWAFFHSSLSPTVELGAQWPPVGIATINPFELPLLNTILLLSSGATVTYAHHSVIEGNRRGAILGTLMTLIFAVLFTICQGIEYLNAGFTIADGVFGSTFFFSTGFHGVHVIIGTLFIAVAFFRMLSYHLTDHHHLGFEASILYWHFVDVVWLFLFISVYWWGS.

A run of 7 helical transmembrane segments spans residues 22–42, 52–72, 96–116, 132–152, 173–193, 211–231, and 253–273; these read PWPLLTSFALLILTSAAVMYF, SGALLVGIGLATTVAAMALWF, GVALFIISEVFFFISVFWAFF, PVGIATINPFELPLLNTILLL, AILGTLMTLIFAVLFTICQGI, FFFSTGFHGVHVIIGTLFIAV, and ILYWHFVDVVWLFLFISVYWW.

Belongs to the cytochrome c oxidase subunit 3 family. As to quaternary structure, component of the cytochrome c oxidase (complex IV, CIV), a multisubunit enzyme composed of a catalytic core of 3 subunits and several supernumerary subunits. The complex exists as a monomer or a dimer and forms supercomplexes (SCs) in the inner mitochondrial membrane with ubiquinol-cytochrome c oxidoreductase (cytochrome b-c1 complex, complex III, CIII).

Its subcellular location is the mitochondrion inner membrane. It catalyses the reaction 4 Fe(II)-[cytochrome c] + O2 + 8 H(+)(in) = 4 Fe(III)-[cytochrome c] + 2 H2O + 4 H(+)(out). In terms of biological role, component of the cytochrome c oxidase, the last enzyme in the mitochondrial electron transport chain which drives oxidative phosphorylation. The respiratory chain contains 3 multisubunit complexes succinate dehydrogenase (complex II, CII), ubiquinol-cytochrome c oxidoreductase (cytochrome b-c1 complex, complex III, CIII) and cytochrome c oxidase (complex IV, CIV), that cooperate to transfer electrons derived from NADH and succinate to molecular oxygen, creating an electrochemical gradient over the inner membrane that drives transmembrane transport and the ATP synthase. Cytochrome c oxidase is the component of the respiratory chain that catalyzes the reduction of oxygen to water. Electrons originating from reduced cytochrome c in the intermembrane space (IMS) are transferred via the dinuclear copper A center (CU(A)) of subunit 2 and heme A of subunit 1 to the active site in subunit 1, a binuclear center (BNC) formed by heme A3 and copper B (CU(B)). The BNC reduces molecular oxygen to 2 water molecules using 4 electrons from cytochrome c in the IMS and 4 protons from the mitochondrial matrix. The protein is Cytochrome c oxidase subunit 3 (COX3) of Mycosarcoma maydis (Corn smut fungus).